A 247-amino-acid polypeptide reads, in one-letter code: Carboxy-S-adenosyl-L-methionine synthase (247 aa).

S-adenosyl-L-methionine is bound by residues tyrosine 40, 65–67 (GAS), 90–91 (DN), 122–123 (DI), asparagine 137, and arginine 204.

Belongs to the class I-like SAM-binding methyltransferase superfamily. Cx-SAM synthase family. Homodimer.

The enzyme catalyses prephenate + S-adenosyl-L-methionine = carboxy-S-adenosyl-L-methionine + 3-phenylpyruvate + H2O. In terms of biological role, catalyzes the conversion of S-adenosyl-L-methionine (SAM) to carboxy-S-adenosyl-L-methionine (Cx-SAM). The chain is Carboxy-S-adenosyl-L-methionine synthase from Pseudomonas putida (strain ATCC 700007 / DSM 6899 / JCM 31910 / BCRC 17059 / LMG 24140 / F1).